Reading from the N-terminus, the 231-residue chain is Probable septum site-determining protein MinC (231 aa).

It belongs to the MinC family. In terms of assembly, interacts with MinD and FtsZ.

Cell division inhibitor that blocks the formation of polar Z ring septums. Rapidly oscillates between the poles of the cell to destabilize FtsZ filaments that have formed before they mature into polar Z rings. Prevents FtsZ polymerization. In Bradyrhizobium diazoefficiens (strain JCM 10833 / BCRC 13528 / IAM 13628 / NBRC 14792 / USDA 110), this protein is Probable septum site-determining protein MinC.